We begin with the raw amino-acid sequence, 1064 residues long: Bifunctional cytochrome P450/NADPH--P450 reductase ascE (1064 aa).

Residues 1 to 484 form a cytochrome P450 region; it reads MTELIPGPKG…LHGGAKKGSK (484 aa). C411 provides a ligand contact to heme. The NADPH-P-450 reductase stretch occupies residues 485–1064; sequence IDGPSSGASL…ANRYVTEIFA (580 aa). The 141-residue stretch at 504 to 644 folds into the Flavodoxin-like domain; the sequence is MTILYGSDSG…DFERWQDDQL (141 aa). FMN contacts are provided by residues 510–514 and 588–620; these read SDSGT and VYGC…KRIA. Residues 676-905 form the FAD-binding FR-type domain; sequence VDADEATVQS…KPALRLFHPP (230 aa).

The protein in the N-terminal section; belongs to the cytochrome P450 family. FAD serves as cofactor. The cofactor is FMN. It depends on heme as a cofactor.

It catalyses the reaction ilicicolin A + NADPH + O2 + H(+) = ilicicolin A epoxide + NADP(+) + H2O. It functions in the pathway secondary metabolite biosynthesis; terpenoid biosynthesis. Functionally, bifunctional cytochrome P450/NADPH--P450 reductase; part of the asc-1 gene cluster that mediates the biosynthesis both ascochlorin and ascofuranone, a strong inhibitor of cyanide-insensitive alternative oxidases and a promising drug candidate against African trypanosomiasis. The first step in the pathway is performed by the non-reducing polyketide synthase ascC that produces orsellinic acid by condensing acetyl-CoA with 3 malonyl-CoA units. Orsellinic acid is then prenylated by the prenyltransferase ascA to yield ilicicolinic acid B. Ilicicolinic acid B is further reduced to ilicicolin B by the reductase ascB. The halogenase ascD then chlorinates ilicicolin B to produce ilicicolin A which is converted to ilicicolin A epoxide by the cytochrome P450 monooxygenase ascE that catalyzes stereoselective epoxidation of the terminal double bond of the prenyl group. Ilicicolin A epoxide is the last common precursor for the biosynthesis of ascofuranone and ascochlorin. The terpene cyclase ascF produces a monocyclic terpene, and the cyclization reaction is proposed to be initiated by protonation of the terminal epoxide of ilicicolin A epoxide to generate a monocyclic tertiarycation, which is followed by a series of hydride and methyl shifts with abstraction of proton, leading to the formation of the (14S,15R,19R)-trimethylcyclohexanone ring structure of ilicicolin C, which is finally reduced to ascochlorin by the dehydrogenase ascG. On the other hand, ilicicolin A epoxide is hydroxylated by the cytochrome P450 monooxygenase ascH, and the resultant product is cyclized by the terpene cyclase ascI to ascofuranol via protonation-initiated epoxide ring opening, which facilitates the 6-endo-tet cyclization to form the tetrahy-drofuran ring. Finally, ascofuranol is oxidized into ascofuranone by ascJ. This Acremonium egyptiacum (Oospora egyptiaca) protein is Bifunctional cytochrome P450/NADPH--P450 reductase ascE.